The chain runs to 741 residues: Methionine--tRNA ligase (741 aa).

Positions 11–21 match the 'HIGH' region motif; it reads PYANGPIHAGH. Zn(2+) is bound by residues cysteine 143, cysteine 146, cysteine 156, and cysteine 159. The 'KMSKS' region motif lies at 345–349; the sequence is KFSTS. Threonine 348 contacts ATP. The 101-residue stretch at 641 to 741 folds into the tRNA-binding domain; sequence EFAKLDLRVG…KEVKLGARIR (101 aa).

It belongs to the class-I aminoacyl-tRNA synthetase family. MetG type 1 subfamily. Homodimer. Zn(2+) is required as a cofactor.

It is found in the cytoplasm. The catalysed reaction is tRNA(Met) + L-methionine + ATP = L-methionyl-tRNA(Met) + AMP + diphosphate. Is required not only for elongation of protein synthesis but also for the initiation of all mRNA translation through initiator tRNA(fMet) aminoacylation. The sequence is that of Methionine--tRNA ligase from Thermococcus kodakarensis (strain ATCC BAA-918 / JCM 12380 / KOD1) (Pyrococcus kodakaraensis (strain KOD1)).